A 481-amino-acid chain; its full sequence is MVGVTPEPRTLAEKVWASHVVRSADGEPDLLFIDLHLLHEVTSPQAFDGLRLAGRRVRRTDLTIATEDHNTPTGYADPSYQSRRGDLLTITDPTSRTQIETLRRNCAEFGVRLHPLGDENQGIVHVIGPQLGLTQPGMTIVCGDSHTATHGAFGALAFGIGTSEVEHVLATQTLPQARPRTMAVNVVGDLAPGVTAKDLVLALIAQVGTGGGRGHVVEYRGEAIRKLSMEGRMTIANMSIEWGAKAGLIAPDDTTFGYLRGRPNAPAGADWEAAVAYWRTLPTDAGATFDSEVTLDASQITPFVTWGTNPGQGASLDASVPNPEEFATEPERAAARRALEYMDLAVGTPLRELTVDVVFVGSCTNGRIEDLRAAADVLRGRRVAPGVRMLVVPGSAAVRENAEAEGLDKVFTEAGAEWRFAGCSMCLGMNPDTLRPGQRAASTSNRNFEGRQGRGGRTHLVSPPVAAATAVTGRLAAPADL.

[4Fe-4S] cluster is bound by residues Cys363, Cys423, and Cys426. The segment at 434–465 (LRPGQRAASTSNRNFEGRQGRGGRTHLVSPPV) is disordered.

This sequence belongs to the aconitase/IPM isomerase family. LeuC type 1 subfamily. In terms of assembly, heterodimer of LeuC and LeuD. It depends on [4Fe-4S] cluster as a cofactor.

It carries out the reaction (2R,3S)-3-isopropylmalate = (2S)-2-isopropylmalate. The protein operates within amino-acid biosynthesis; L-leucine biosynthesis; L-leucine from 3-methyl-2-oxobutanoate: step 2/4. In terms of biological role, catalyzes the isomerization between 2-isopropylmalate and 3-isopropylmalate, via the formation of 2-isopropylmaleate. This chain is 3-isopropylmalate dehydratase large subunit, found in Salinispora tropica (strain ATCC BAA-916 / DSM 44818 / JCM 13857 / NBRC 105044 / CNB-440).